We begin with the raw amino-acid sequence, 279 residues long: 3-methyl-2-oxobutanoate hydroxymethyltransferase (279 aa).

2 residues coordinate Mg(2+): Asp-53 and Asp-92. 3-methyl-2-oxobutanoate is bound by residues 53-54, Asp-92, and Lys-122; that span reads DS. Glu-124 contributes to the Mg(2+) binding site. Glu-191 acts as the Proton acceptor in catalysis.

The protein belongs to the PanB family. Homodecamer; pentamer of dimers. It depends on Mg(2+) as a cofactor.

The protein localises to the cytoplasm. It catalyses the reaction 3-methyl-2-oxobutanoate + (6R)-5,10-methylene-5,6,7,8-tetrahydrofolate + H2O = 2-dehydropantoate + (6S)-5,6,7,8-tetrahydrofolate. The protein operates within cofactor biosynthesis; (R)-pantothenate biosynthesis; (R)-pantoate from 3-methyl-2-oxobutanoate: step 1/2. Its function is as follows. Catalyzes the reversible reaction in which hydroxymethyl group from 5,10-methylenetetrahydrofolate is transferred onto alpha-ketoisovalerate to form ketopantoate. The protein is 3-methyl-2-oxobutanoate hydroxymethyltransferase of Maricaulis maris (strain MCS10) (Caulobacter maris).